Here is a 466-residue protein sequence, read N- to C-terminus: 3-isopropylmalate dehydratase large subunit (466 aa).

[4Fe-4S] cluster is bound by residues C347, C407, and C410.

The protein belongs to the aconitase/IPM isomerase family. LeuC type 1 subfamily. Heterodimer of LeuC and LeuD. Requires [4Fe-4S] cluster as cofactor.

The enzyme catalyses (2R,3S)-3-isopropylmalate = (2S)-2-isopropylmalate. It functions in the pathway amino-acid biosynthesis; L-leucine biosynthesis; L-leucine from 3-methyl-2-oxobutanoate: step 2/4. Catalyzes the isomerization between 2-isopropylmalate and 3-isopropylmalate, via the formation of 2-isopropylmaleate. This chain is 3-isopropylmalate dehydratase large subunit, found in Escherichia coli O127:H6 (strain E2348/69 / EPEC).